The following is a 55-amino-acid chain: Large ribosomal subunit protein bL33 (55 aa).

Belongs to the bacterial ribosomal protein bL33 family.

The polypeptide is Large ribosomal subunit protein bL33 (Clavibacter sepedonicus (Clavibacter michiganensis subsp. sepedonicus)).